Here is a 118-residue protein sequence, read N- to C-terminus: V-type proton ATPase subunit G 3 (118 aa).

Residues 3–54 (SQSQGIQQLLQAEKRAKDKLEEAKKRKNKRLRQAKEEATADIDQYRLKREAD) adopt a coiled-coil conformation. Residues 19-39 (KDKLEEAKKRKNKRLRQAKEE) are disordered.

Belongs to the V-ATPase G subunit family. V-ATPase is a heteromultimeric enzyme made up of two complexes: the ATP-hydrolytic V1 complex and the proton translocation V0 complex. The V1 complex consists of three catalytic AB heterodimers that form a heterohexamer, three peripheral stalks each consisting of EG heterodimers, one central rotor including subunits D and F, and the regulatory subunits C and H. The proton translocation complex V0 consists of the proton transport subunit a, a ring of proteolipid subunits c9c'', rotary subunit d, subunits e and f, and two accessory subunits.

Subunit of the V1 complex of vacuolar(H+)-ATPase (V-ATPase), a multisubunit enzyme composed of a peripheral complex (V1) that hydrolyzes ATP and a membrane integral complex (V0) that translocates protons. V-ATPase is responsible for acidifying and maintaining the pH of intracellular compartments and in some cell types, is targeted to the plasma membrane, where it is responsible for acidifying the extracellular environment. This Xenopus laevis (African clawed frog) protein is V-type proton ATPase subunit G 3 (atp6v1g3).